Consider the following 712-residue polypeptide: Polyribonucleotide nucleotidyltransferase (712 aa).

Mg(2+)-binding residues include Asp-487 and Asp-493. A KH domain is found at 554-613 (PRIEVMNIPVDKIREVIGSGGKVIREIVEKTGAKINIEDDGTVKIASSSGKEIEAARKWI). The S1 motif domain occupies 623 to 691 (GQVYEGTVVK…ERGKVRLSMK (69 aa)).

Belongs to the polyribonucleotide nucleotidyltransferase family. Mg(2+) is required as a cofactor.

Its subcellular location is the cytoplasm. It carries out the reaction RNA(n+1) + phosphate = RNA(n) + a ribonucleoside 5'-diphosphate. Functionally, involved in mRNA degradation. Catalyzes the phosphorolysis of single-stranded polyribonucleotides processively in the 3'- to 5'-direction. This Rhizobium johnstonii (strain DSM 114642 / LMG 32736 / 3841) (Rhizobium leguminosarum bv. viciae) protein is Polyribonucleotide nucleotidyltransferase.